A 106-amino-acid polypeptide reads, in one-letter code: Thioredoxin (106 aa).

One can recognise a Thioredoxin domain in the interval 2–106 (VNFLKTKADF…GLREKIKKNK (105 aa)). Residues cysteine 32 and cysteine 35 each act as nucleophile in the active site. Cysteine 32 and cysteine 35 are oxidised to a cystine.

The protein belongs to the thioredoxin family.

Its subcellular location is the cytoplasm. Its function is as follows. Participates in various redox reactions through the reversible oxidation of its active center dithiol to a disulfide and catalyzes dithiol-disulfide exchange reactions. This is Thioredoxin (THIO) from Geodia cydonium (Sponge).